A 471-amino-acid chain; its full sequence is Probable lysophospholipase BODYGUARD 2 (471 aa).

Positions 1–45 (MGIARWLNRTVGFFVFALLDIADFLLCYTYKTLDYFLESERKPCY) are cleaved as a signal peptide. Cys46 is lipidated: N-palmitoyl cysteine. Residues 193–296 (VVFIHGFVSS…AIKSLTLLAP (104 aa)) form the AB hydrolase-1 domain. Residue His197 is part of the active site. Ser271 (nucleophile) is an active-site residue. Active-site charge relay system residues include Asp418 and His446.

The protein resides in the cell membrane. The protein localises to the secreted. It localises to the cell wall. In terms of biological role, involved in cuticle development and morphogenesis. This chain is Probable lysophospholipase BODYGUARD 2, found in Arabidopsis thaliana (Mouse-ear cress).